Consider the following 368-residue polypeptide: RNA polymerase sigma factor SigA (368 aa).

Over residues 71-83 (NEKDSSDTDDKIN) the composition is skewed to basic and acidic residues. A disordered region spans residues 71-90 (NEKDSSDTDDKINPNDLSAP). The sigma-70 factor domain-2 stretch occupies residues 135-205 (LAEANLRLVV…TRAIADQART (71 aa)). An Interaction with polymerase core subunit RpoC motif is present at residues 159 to 162 (DLIQ). A sigma-70 factor domain-3 region spans residues 214-290 (ETINKLIRVQ…DQEAQSPSDH (77 aa)). The sigma-70 factor domain-4 stretch occupies residues 303-356 (VLDTLTDREENVLRLRFGLDDGRTRTLEEVGKVFGVTRERIRQIEAKALRKLRH). Positions 329–348 (LEEVGKVFGVTRERIRQIEA) form a DNA-binding region, H-T-H motif.

It belongs to the sigma-70 factor family. RpoD/SigA subfamily. In terms of assembly, interacts transiently with the RNA polymerase catalytic core.

It is found in the cytoplasm. In terms of biological role, sigma factors are initiation factors that promote the attachment of RNA polymerase to specific initiation sites and are then released. This sigma factor is the primary sigma factor during exponential growth. This chain is RNA polymerase sigma factor SigA, found in Staphylococcus epidermidis (strain ATCC 35984 / DSM 28319 / BCRC 17069 / CCUG 31568 / BM 3577 / RP62A).